The sequence spans 795 residues: Phenylalanine--tRNA ligase beta subunit (795 aa).

The tRNA-binding domain maps to 39 to 149 (SGEFSGVVVA…ADAPIGVDIR (111 aa)). The B5 domain maps to 402–477 (PKQPIIRLRR…RIYGYNRIPN (76 aa)). 4 residues coordinate Mg(2+): Asp-455, Asp-461, Glu-464, and Glu-465. The region spanning 701 to 794 (SKFPANNRDI…LAQRFQASLR (94 aa)) is the FDX-ACB domain.

Belongs to the phenylalanyl-tRNA synthetase beta subunit family. Type 1 subfamily. In terms of assembly, tetramer of two alpha and two beta subunits. Mg(2+) serves as cofactor.

Its subcellular location is the cytoplasm. It carries out the reaction tRNA(Phe) + L-phenylalanine + ATP = L-phenylalanyl-tRNA(Phe) + AMP + diphosphate + H(+). The protein is Phenylalanine--tRNA ligase beta subunit of Haemophilus ducreyi (strain 35000HP / ATCC 700724).